Here is a 242-residue protein sequence, read N- to C-terminus: Ribonuclease PH (242 aa).

Residues Arg-90 and 128–130 (GTR) contribute to the phosphate site.

The protein belongs to the RNase PH family. In terms of assembly, homohexameric ring arranged as a trimer of dimers.

The catalysed reaction is tRNA(n+1) + phosphate = tRNA(n) + a ribonucleoside 5'-diphosphate. Functionally, phosphorolytic 3'-5' exoribonuclease that plays an important role in tRNA 3'-end maturation. Removes nucleotide residues following the 3'-CCA terminus of tRNAs; can also add nucleotides to the ends of RNA molecules by using nucleoside diphosphates as substrates, but this may not be physiologically important. Probably plays a role in initiation of 16S rRNA degradation (leading to ribosome degradation) during starvation. The chain is Ribonuclease PH from Nocardioides sp. (strain ATCC BAA-499 / JS614).